The chain runs to 29 residues: Cytochrome b6-f complex subunit 8 (29 aa).

A helical transmembrane segment spans residues 3-23; sequence TVSLAWAALMVVFTFSLSLVV.

The protein belongs to the PetN family. In terms of assembly, the 4 large subunits of the cytochrome b6-f complex are cytochrome b6, subunit IV (17 kDa polypeptide, PetD), cytochrome f and the Rieske protein, while the 4 small subunits are PetG, PetL, PetM and PetN. The complex functions as a dimer.

Its subcellular location is the plastid. The protein localises to the chloroplast thylakoid membrane. Component of the cytochrome b6-f complex, which mediates electron transfer between photosystem II (PSII) and photosystem I (PSI), cyclic electron flow around PSI, and state transitions. In Chloranthus spicatus (Chulantree), this protein is Cytochrome b6-f complex subunit 8.